A 471-amino-acid chain; its full sequence is MVLDSGAQAYDQAPPSPPTSPPSLRHRLKPSDRDGPPLYPWSQSLALPLALAVPPALQPQPEQQPFSQMLLGHRGHMRRSESTYSVNSTGRRGRGTLGRPPPGRGRNPGGGTLRPAASLPHIAKTQRDAGHIASKSPCMLVALRPTNMDRERDKFFQSHYTYNPQFEYQEPMPTAVLEKYCEASGQFIHQAVGIIEAVLEKFGTYEHFEAATGGQLLTKCQIWSIVRKYMQKEGCAGEVVVQLSEDLLSQAVMMVENSRPTLAINLTGARQYWLEGMLRHEIGTHYLRGVNNARQPWHNAEGRLRYGLRPANPTEEGLASLHSVLFRKQPFLWRAALLYYTIHRAARMSFRQLFQDLERYVQDADVRWEYCVRAKRGQTDTSLPGCFSKDQVYLDGIVRILRHRQTIDFPLLTSLGKVSYEDVDHLRPHGVLDNTRVPHFMQDLARYRQQLEHIMATNRLDEAELGRLLPD.

Disordered stretches follow at residues 1–40 (MVLD…PLYP) and 76–116 (HMRR…LRPA). His-280 contributes to the Zn(2+) binding site. Glu-281 (nucleophile) is an active-site residue. Residues His-285 and Glu-316 each coordinate Zn(2+).

Belongs to the peptidase MATCAP family. The cofactor is Zn(2+).

It localises to the cytoplasm. It is found in the cytoskeleton. The enzyme catalyses C-terminal L-alpha-aminoacyl-L-glutamyl-L-glutamyl-L-tyrosyl-[tubulin] + H2O = C-terminal L-alpha-aminoacyl-L-glutamyl-L-glutamyl-[tubulin] + L-tyrosine. It carries out the reaction C-terminal L-alpha-aminoacyl-L-glutamyl-L-glutamyl-L-phenylalanyl-[tubulin] + H2O = C-terminal L-alpha-aminoacyl-L-glutamyl-L-glutamyl-[tubulin] + L-phenylalanine. Tyrosine carboxypeptidase that removes the C-terminal tyrosine residue of alpha-tubulin, thereby regulating microtubule dynamics and function. Also able to remove the C-terminal phenylalanine residue of alpha-tubulin TUBA8. Recognizes adjacent tubulin dimers along the same protofilament. The polypeptide is Microtubule-associated tyrosine carboxypeptidase 1 (Homo sapiens (Human)).